Here is a 306-residue protein sequence, read N- to C-terminus: Protodermal factor 1 (306 aa).

The N-terminal stretch at 1 to 23 is a signal peptide; the sequence is MRGMVSFAVWALFAALLSQQLFA. Residues 40–56 show a composition bias toward low complexity; sequence PPSGSHGTPPSHTPPSS. The segment at 40-156 is disordered; that stretch reads PPSGSHGTPP…VVTPPSPIVD (117 aa). Over residues 62–83 the composition is skewed to pro residues; that stretch reads PYDPSPSTPSHPSPPSHTPTPS. The segment covering 84 to 99 has biased composition (low complexity); it reads TPSHTPTPHTPSHTPT. Over residues 139–154 the composition is skewed to pro residues; it reads SPPPRTPVVVTPPSPI.

In terms of tissue distribution, confined to the shoot apical meristem (SAM) at the layer L1 in vegetative, infloresence and floral meristems, as well as in protoderm of organ primordia, including during embryogenesis. Also present in the tip of emerging lateral root primordia.

Functionally, may be involved in the regulation of meristem growth. This is Protodermal factor 1 (PDF1) from Arabidopsis thaliana (Mouse-ear cress).